A 120-amino-acid chain; its full sequence is NAD(P)H-quinone oxidoreductase subunit 3 (120 aa).

The next 3 helical transmembrane spans lie at 6–26, 64–84, and 89–109; these read GYDA…LALI, MFAL…PWAV, and LGVL…VALA.

The protein belongs to the complex I subunit 3 family. NDH-1 can be composed of about 15 different subunits; different subcomplexes with different compositions have been identified which probably have different functions.

It localises to the cellular thylakoid membrane. The enzyme catalyses a plastoquinone + NADH + (n+1) H(+)(in) = a plastoquinol + NAD(+) + n H(+)(out). It catalyses the reaction a plastoquinone + NADPH + (n+1) H(+)(in) = a plastoquinol + NADP(+) + n H(+)(out). Functionally, NDH-1 shuttles electrons from an unknown electron donor, via FMN and iron-sulfur (Fe-S) centers, to quinones in the respiratory and/or the photosynthetic chain. The immediate electron acceptor for the enzyme in this species is believed to be plastoquinone. Couples the redox reaction to proton translocation, and thus conserves the redox energy in a proton gradient. Cyanobacterial NDH-1 also plays a role in inorganic carbon-concentration. The chain is NAD(P)H-quinone oxidoreductase subunit 3 from Parasynechococcus marenigrum (strain WH8102).